A 105-amino-acid polypeptide reads, in one-letter code: Large ribosomal subunit protein uL24 (105 aa).

Belongs to the universal ribosomal protein uL24 family. As to quaternary structure, part of the 50S ribosomal subunit.

Its function is as follows. One of two assembly initiator proteins, it binds directly to the 5'-end of the 23S rRNA, where it nucleates assembly of the 50S subunit. In terms of biological role, one of the proteins that surrounds the polypeptide exit tunnel on the outside of the subunit. The protein is Large ribosomal subunit protein uL24 of Vibrio vulnificus (strain YJ016).